The following is a 606-amino-acid chain: R-linalool synthase, chloroplastic (606 aa).

The N-terminal 51 residues, 1-51, are a transit peptide targeting the chloroplast; the sequence is MCTIISVNHHHVAILSKPKVKLFHTKNKRSASINLPWSLSPSSSAASRPIS. R326, D363, D367, R504, and D507 together coordinate (2E)-geranyl diphosphate. Positions 363 and 367 each coordinate Mg(2+). The DDXXD motif motif lies at 363–367; it reads DDVYD. Residues D507, T511, and E515 each coordinate Mg(2+).

The protein belongs to the terpene synthase family. Tpsb subfamily. Requires Mg(2+) as cofactor. Mn(2+) is required as a cofactor.

Its subcellular location is the plastid. It localises to the chloroplast. It carries out the reaction (2E)-geranyl diphosphate + H2O = (R)-linalool + diphosphate. It participates in secondary metabolite biosynthesis; terpenoid biosynthesis. In terms of biological role, monoterpene synthase that catalyzes the formation of (3R)-linalool from geranyl diphosphate, but not from farnesyl diphosphate or geranylgeranyl diphosphate. The chain is R-linalool synthase, chloroplastic from Mentha aquatica (Water mint).